The sequence spans 334 residues: Large ribosomal subunit protein uL3 (334 aa).

Basic residues predominate over residues 1–10 (MGMKKNRPRR). Residues 1-21 (MGMKKNRPRRGSLAFSPRKRA) are disordered.

The protein belongs to the universal ribosomal protein uL3 family. Part of the 50S ribosomal subunit. Forms a cluster with proteins L14 and L24e.

Its function is as follows. One of the primary rRNA binding proteins, it binds directly near the 3'-end of the 23S rRNA, where it nucleates assembly of the 50S subunit. The sequence is that of Large ribosomal subunit protein uL3 from Methanococcus maripaludis (strain C5 / ATCC BAA-1333).